The chain runs to 67 residues: (2R)-sulfolactate sulfo-lyase subunit alpha (67 aa).

(2R)-sulfolactate sulfo-lyase is composed of a SuyA and a SuyB subunit.

It is found in the cytoplasm. The enzyme catalyses (2R)-3-sulfolactate = sulfite + pyruvate + H(+). Functionally, together with SuyB, desulfonates sulfolactate to pyruvate and sulfite. The sequence is that of (2R)-sulfolactate sulfo-lyase subunit alpha (suyA) from Paracoccus pantotrophus (Thiosphaera pantotropha).